The following is a 94-amino-acid chain: Progonadoliberin-3 (94 aa).

Residues 1 to 23 form the signal peptide; the sequence is MEWKGRVLVQLLMLVCVLEVSLC. A Pyrrolidone carboxylic acid modification is found at Gln-24. Position 33 is a glycine amide (Gly-33).

It belongs to the GnRH family.

Its subcellular location is the secreted. In terms of biological role, stimulates the secretion of gonadotropins. This Rutilus rutilus (Roach) protein is Progonadoliberin-3 (gnrh3).